A 256-amino-acid polypeptide reads, in one-letter code: Thiazole synthase (256 aa).

K96 acts as the Schiff-base intermediate with DXP in catalysis. 1-deoxy-D-xylulose 5-phosphate contacts are provided by residues G157, 183-184 (AG), and 205-206 (NT).

The protein belongs to the ThiG family. As to quaternary structure, homotetramer. Forms heterodimers with either ThiH or ThiS.

The protein localises to the cytoplasm. It carries out the reaction [ThiS sulfur-carrier protein]-C-terminal-Gly-aminoethanethioate + 2-iminoacetate + 1-deoxy-D-xylulose 5-phosphate = [ThiS sulfur-carrier protein]-C-terminal Gly-Gly + 2-[(2R,5Z)-2-carboxy-4-methylthiazol-5(2H)-ylidene]ethyl phosphate + 2 H2O + H(+). The protein operates within cofactor biosynthesis; thiamine diphosphate biosynthesis. Functionally, catalyzes the rearrangement of 1-deoxy-D-xylulose 5-phosphate (DXP) to produce the thiazole phosphate moiety of thiamine. Sulfur is provided by the thiocarboxylate moiety of the carrier protein ThiS. In vitro, sulfur can be provided by H(2)S. This Clostridium beijerinckii (strain ATCC 51743 / NCIMB 8052) (Clostridium acetobutylicum) protein is Thiazole synthase.